A 219-amino-acid polypeptide reads, in one-letter code: Elongation factor Ts (219 aa).

The interval threonine 82–valine 85 is involved in Mg(2+) ion dislocation from EF-Tu.

The protein belongs to the EF-Ts family.

Its subcellular location is the cytoplasm. Functionally, associates with the EF-Tu.GDP complex and induces the exchange of GDP to GTP. It remains bound to the aminoacyl-tRNA.EF-Tu.GTP complex up to the GTP hydrolysis stage on the ribosome. This chain is Elongation factor Ts, found in Anaeromyxobacter dehalogenans (strain 2CP-C).